We begin with the raw amino-acid sequence, 210 residues long: Urease accessory protein UreF (210 aa).

Belongs to the UreF family. UreD, UreF and UreG form a complex that acts as a GTP-hydrolysis-dependent molecular chaperone, activating the urease apoprotein by helping to assemble the nickel containing metallocenter of UreC. The UreE protein probably delivers the nickel.

Its subcellular location is the cytoplasm. Required for maturation of urease via the functional incorporation of the urease nickel metallocenter. This Cereibacter sphaeroides (strain ATCC 17025 / ATH 2.4.3) (Rhodobacter sphaeroides) protein is Urease accessory protein UreF.